We begin with the raw amino-acid sequence, 119 residues long: MAPIQEYVGTLIYVGVALFIGVAALLVGALLGPKKPGRAKLMPYESGNDPAGEVKRFPVHFYVVAMLFILFDVEVAFLWPYAVSAGGLGLYGFLGVLAFTLLLFVGFLYEWWKGVMRWH.

3 consecutive transmembrane segments (helical) span residues 11 to 31 (LIYVGVALFIGVAALLVGALL), 59 to 79 (VHFYVVAMLFILFDVEVAFLW), and 88 to 108 (LGLYGFLGVLAFTLLLFVGFL).

This sequence belongs to the complex I subunit 3 family. As to quaternary structure, NDH-1 is composed of 15 different subunits, Nqo1 to Nqo15. The complex has a L-shaped structure, with the hydrophobic arm (subunits Nqo7, Nqo8 and Nqo10 to Nqo14) embedded in the membrane and the hydrophilic peripheral arm (subunits Nqo1 to Nqo6, Nqo9 and Nqo15) protruding into the bacterial cytoplasm. The hydrophilic domain contains all the redox centers.

It is found in the cell inner membrane. It catalyses the reaction a quinone + NADH + 5 H(+)(in) = a quinol + NAD(+) + 4 H(+)(out). NDH-1 shuttles electrons from NADH, via FMN and iron-sulfur (Fe-S) centers, to quinones in the respiratory chain. The immediate electron acceptor for the enzyme in this species is menaquinone. Couples the redox reaction to proton translocation (for every two electrons transferred, four hydrogen ions are translocated across the cytoplasmic membrane), and thus conserves the redox energy in a proton gradient required for the synthesis of ATP. This Thermus thermophilus (strain ATCC 27634 / DSM 579 / HB8) protein is NADH-quinone oxidoreductase subunit 7 (nqo7).